The primary structure comprises 209 residues: Probable glutathione peroxidase 8 (209 aa).

An N-acetylmethionine modification is found at M1. A helical membrane pass occupies residues 18-40 (IFAVLLSMVLCTVMLFLLQLKFL). Residue C79 is part of the active site.

It belongs to the glutathione peroxidase family.

Its subcellular location is the membrane. The enzyme catalyses 2 glutathione + H2O2 = glutathione disulfide + 2 H2O. The sequence is that of Probable glutathione peroxidase 8 (Gpx8) from Mus musculus (Mouse).